The following is a 263-amino-acid chain: Malonyl-[acyl-carrier protein] O-methyltransferase (263 aa).

It belongs to the methyltransferase superfamily.

It carries out the reaction malonyl-[ACP] + S-adenosyl-L-methionine = malonyl-[ACP] methyl ester + S-adenosyl-L-homocysteine. It functions in the pathway cofactor biosynthesis; biotin biosynthesis. In terms of biological role, converts the free carboxyl group of a malonyl-thioester to its methyl ester by transfer of a methyl group from S-adenosyl-L-methionine (SAM). It allows to synthesize pimeloyl-ACP via the fatty acid synthetic pathway. The polypeptide is Malonyl-[acyl-carrier protein] O-methyltransferase (Chlorobium luteolum (strain DSM 273 / BCRC 81028 / 2530) (Pelodictyon luteolum)).